The primary structure comprises 271 residues: Tropinone reductase homolog At2g29360 (271 aa).

L22–H46 is a binding site for NADP(+). Substrate is bound at residue S155. The active-site Proton acceptor is the Y168.

The protein belongs to the short-chain dehydrogenases/reductases (SDR) family. SDR65C subfamily.

Functionally, oxidoreductase active on cyclic ketones, but not on tropinone or nortropinone. The polypeptide is Tropinone reductase homolog At2g29360 (Arabidopsis thaliana (Mouse-ear cress)).